We begin with the raw amino-acid sequence, 185 residues long: Ribosome-recycling factor (185 aa).

The protein belongs to the RRF family.

The protein resides in the cytoplasm. Functionally, responsible for the release of ribosomes from messenger RNA at the termination of protein biosynthesis. May increase the efficiency of translation by recycling ribosomes from one round of translation to another. This chain is Ribosome-recycling factor, found in Citrifermentans bemidjiense (strain ATCC BAA-1014 / DSM 16622 / JCM 12645 / Bem) (Geobacter bemidjiensis).